Here is a 428-residue protein sequence, read N- to C-terminus: Serine--tRNA ligase (428 aa).

Residue threonine 231–glutamate 233 participates in L-serine binding. Position 262-264 (arginine 262–glutamate 264) interacts with ATP. Glutamate 285 contacts L-serine. Glutamate 349 to serine 352 is a binding site for ATP. Serine 385 lines the L-serine pocket.

This sequence belongs to the class-II aminoacyl-tRNA synthetase family. Type-1 seryl-tRNA synthetase subfamily. Homodimer. The tRNA molecule binds across the dimer.

It localises to the cytoplasm. It carries out the reaction tRNA(Ser) + L-serine + ATP = L-seryl-tRNA(Ser) + AMP + diphosphate + H(+). It catalyses the reaction tRNA(Sec) + L-serine + ATP = L-seryl-tRNA(Sec) + AMP + diphosphate + H(+). It functions in the pathway aminoacyl-tRNA biosynthesis; selenocysteinyl-tRNA(Sec) biosynthesis; L-seryl-tRNA(Sec) from L-serine and tRNA(Sec): step 1/1. In terms of biological role, catalyzes the attachment of serine to tRNA(Ser). Is also able to aminoacylate tRNA(Sec) with serine, to form the misacylated tRNA L-seryl-tRNA(Sec), which will be further converted into selenocysteinyl-tRNA(Sec). This is Serine--tRNA ligase from Staphylococcus aureus (strain MW2).